The sequence spans 146 residues: Hemoglobin subunit beta (146 aa).

Val-1 carries the post-translational modification N-acetylvaline. Residues 2-146 (HLTGEEKSAV…VANALAHKYH (145 aa)) form the Globin domain. Thr-12 is subject to Phosphothreonine. A Phosphoserine modification is found at Ser-44. Position 59 is an N6-acetyllysine (Lys-59). Residue His-63 coordinates heme b. An N6-acetyllysine modification is found at Lys-82. Residue His-92 coordinates heme b. An S-nitrosocysteine modification is found at Cys-93. Residue Lys-144 is modified to N6-acetyllysine.

This sequence belongs to the globin family. Heterotetramer of two alpha chains and two beta chains. In terms of tissue distribution, red blood cells.

In terms of biological role, involved in oxygen transport from the lung to the various peripheral tissues. The protein is Hemoglobin subunit beta (HBB) of Phoca vitulina (Harbor seal).